Reading from the N-terminus, the 249-residue chain is Tryptophan synthase alpha chain (249 aa).

Catalysis depends on proton acceptor residues E43 and D54.

It belongs to the TrpA family. Tetramer of two alpha and two beta chains.

It catalyses the reaction (1S,2R)-1-C-(indol-3-yl)glycerol 3-phosphate + L-serine = D-glyceraldehyde 3-phosphate + L-tryptophan + H2O. It functions in the pathway amino-acid biosynthesis; L-tryptophan biosynthesis; L-tryptophan from chorismate: step 5/5. Its function is as follows. The alpha subunit is responsible for the aldol cleavage of indoleglycerol phosphate to indole and glyceraldehyde 3-phosphate. This Campylobacter jejuni subsp. doylei (strain ATCC BAA-1458 / RM4099 / 269.97) protein is Tryptophan synthase alpha chain.